Consider the following 698-residue polypeptide: Long-chain-fatty-acid--CoA ligase 1 (698 aa).

Methionine 1 carries the post-translational modification N-acetylmethionine. The residue at position 9 (tyrosine 9) is a 3'-nitrotyrosine. A helical; Signal-anchor for type III membrane protein membrane pass occupies residues 25 to 45 (LPTNTLMGFGAFAALTTFWYA). The Cytoplasmic segment spans residues 46 to 698 (TRPKPLKPPC…IDDLYSTIKV (653 aa)). The residue at position 84 (tyrosine 84) is a Phosphotyrosine. O-linked (GlcNAc) serine glycosylation occurs at serine 135. N6-acetyllysine occurs at positions 207, 356, and 386. Position 620 is a phosphoserine (serine 620). Lysine 632 is subject to N6-acetyllysine.

This sequence belongs to the ATP-dependent AMP-binding enzyme family. Requires Mg(2+) as cofactor. In terms of tissue distribution, highly expressed in liver, heart, skeletal muscle, kidney and erythroid cells, and to a lesser extent in brain, lung, placenta and pancreas.

The protein localises to the mitochondrion outer membrane. Its subcellular location is the peroxisome membrane. The protein resides in the microsome membrane. It localises to the endoplasmic reticulum membrane. It catalyses the reaction a long-chain fatty acid + ATP + CoA = a long-chain fatty acyl-CoA + AMP + diphosphate. The enzyme catalyses (5Z,8Z,11Z,14Z)-eicosatetraenoate + ATP + CoA = (5Z,8Z,11Z,14Z)-eicosatetraenoyl-CoA + AMP + diphosphate. The catalysed reaction is 3,7,11,15-tetramethylhexadecanoate + ATP + CoA = phytanoyl-CoA + AMP + diphosphate. It carries out the reaction hexadecanoate + ATP + CoA = hexadecanoyl-CoA + AMP + diphosphate. It catalyses the reaction (E)-hexadec-2-enoate + ATP + CoA = (2E)-hexadecenoyl-CoA + AMP + diphosphate. The enzyme catalyses 2,6,10,14-tetramethylpentadecanoate + ATP + CoA = pristanoyl-CoA + AMP + diphosphate. The catalysed reaction is 14,15-epoxy-(5Z,8Z,11Z)-eicosatrienoate + ATP + CoA = 14,15-epoxy-(5Z,8Z,11Z)-eicosatrienoyl-CoA + AMP + diphosphate. It carries out the reaction 5-hydroxy-(6E,8Z,11Z,14Z)-eicosatetraenoate + ATP + CoA = 5-hydroxy-(6E,8Z,11Z,14Z)-eicosatetraenoyl-CoA + AMP + diphosphate. It catalyses the reaction 12-hydroxy-(5Z,8Z,10E,14Z)-eicosatetraenoate + ATP + CoA = 12-hydroxy-(5Z,8Z,10E,14Z)-eicosatetraenoyl-CoA + AMP + diphosphate. The enzyme catalyses 15-hydroxy-(5Z,8Z,11Z,13E)-eicosatetraenoate + ATP + CoA = 15-hydroxy-(5Z,8Z,11Z,13E)-eicosatetraenoyl-CoA + AMP + diphosphate. The catalysed reaction is (9Z)-octadecenoate + ATP + CoA = (9Z)-octadecenoyl-CoA + AMP + diphosphate. Inhibited at high temperature and by arachidonate. Its function is as follows. Catalyzes the conversion of long-chain fatty acids to their active form acyl-CoAs for both synthesis of cellular lipids, and degradation via beta-oxidation. Preferentially uses palmitoleate, oleate and linoleate. Preferentially activates arachidonate than epoxyeicosatrienoic acids (EETs) or hydroxyeicosatrienoic acids (HETEs). In Homo sapiens (Human), this protein is Long-chain-fatty-acid--CoA ligase 1.